The following is a 173-amino-acid chain: MILTGKEIQKRIGKDIIITPYSEKQLNPNSYNLRLHEELLIYTELPLDMKKPNLTKKQIIPESGLLLKPGILYLGRTLEFTETHHLVPMLEGRSSIGRLGMLVHVTAGFGDVGFKGFWTLEISVIQPLIVYPGVEVCQIFYHTLEGQITEYTSGKYQANQGIQPSMLYQDFEK.

DCTP is bound by residues R93–R98, D111, T119–E121, and Q138. E121 functions as the Proton donor/acceptor in the catalytic mechanism.

It belongs to the dCTP deaminase family. In terms of assembly, homotrimer.

The catalysed reaction is dCTP + 2 H2O = dUMP + NH4(+) + diphosphate. It participates in pyrimidine metabolism; dUMP biosynthesis; dUMP from dCTP: step 1/1. In terms of biological role, bifunctional enzyme that catalyzes both the deamination of dCTP to dUTP and the hydrolysis of dUTP to dUMP without releasing the toxic dUTP intermediate. This chain is dCTP deaminase, dUMP-forming, found in Leptospira borgpetersenii serovar Hardjo-bovis (strain JB197).